We begin with the raw amino-acid sequence, 341 residues long: Queuosine 5'-phosphate N-glycosylase/hydrolase (341 aa).

Methionine 1 bears the N-acetylmethionine mark. Residues histidine 53, phenylalanine 237, aspartate 239, aspartate 314, tyrosine 315, and aspartate 319 each contribute to the queuine site. Aspartate 239 acts as the Nucleophile or transition state stabilizer in catalysis.

It belongs to the QNG1 protein family.

The catalysed reaction is queuosine 5'-phosphate + H2O = queuine + D-ribose 5-phosphate. In terms of biological role, catalyzes the hydrolysis of queuosine 5'-phosphate, releasing the nucleobase queuine (q). Is required for salvage of queuine from exogenous queuosine (Q) that is imported and then converted to queuosine 5'-phosphate intracellularly. This is Queuosine 5'-phosphate N-glycosylase/hydrolase from Bos taurus (Bovine).